A 333-amino-acid chain; its full sequence is DNA repair and recombination protein RadA (333 aa).

127 to 134 (GEFGSGKT) contacts ATP.

Belongs to the eukaryotic RecA-like protein family.

Its function is as follows. Involved in DNA repair and in homologous recombination. Binds and assemble on single-stranded DNA to form a nucleoprotein filament. Hydrolyzes ATP in a ssDNA-dependent manner and promotes DNA strand exchange between homologous DNA molecules. The polypeptide is DNA repair and recombination protein RadA (Pyrobaculum aerophilum (strain ATCC 51768 / DSM 7523 / JCM 9630 / CIP 104966 / NBRC 100827 / IM2)).